We begin with the raw amino-acid sequence, 225 residues long: NVWRFPYLCQKNGGGAYLVPYLVLLIIIGIPLFFLELAVGQRIRRGSIGVWHYVCPRLGGIGFSSCIVCLFVGLYYNVIIGWSIFYFFKSFQYPLPWSECPVSRNGTVAVVEAECEKSSATTYFWYREALDISNSISESGGLNWKMTLCLLVAWRIVGMAVVKGIQSSGKVMYFSSLFPYVVLACFLVRGLLLRGAIDGILHMFTPKLDKMLDPQVWRDAATQIF.

A run of 3 helical transmembrane segments spans residues 1 to 8 (NVWRFPYL), 16 to 35 (AYLV…LFFL), and 60 to 80 (GIGF…NVII). At 81 to 143 (GWSIFYFFKS…NSISESGGLN (63 aa)) the chain is on the extracellular side. Residue asparagine 105 is glycosylated (N-linked (GlcNAc...) asparagine). Transmembrane regions (helical) follow at residues 144-162 (WKMT…MAVV), 171-188 (VMYF…CFLV), and 224-225 (IF).

It belongs to the sodium:neurotransmitter symporter (SNF) (TC 2.A.22) family.

It is found in the cytoplasmic vesicle. Its subcellular location is the secretory vesicle. The protein resides in the synaptic vesicle membrane. The protein localises to the postsynapse. It localises to the presynapse. It catalyses the reaction L-proline(in) + Na(+)(in) = L-proline(out) + Na(+)(out). The catalysed reaction is L-leucine(in) + Na(+)(in) = L-leucine(out) + Na(+)(out). The enzyme catalyses glycine(in) + Na(+)(in) = glycine(out) + Na(+)(out). It carries out the reaction L-alanine(in) + Na(+)(in) = L-alanine(out) + Na(+)(out). It catalyses the reaction L-glutamine(in) + Na(+)(in) = L-glutamine(out) + Na(+)(out). Synaptic vesicle transporter with apparent selectivity for neutral amino acids. The transport is sodium-coupled but chloride-independent, likely driven by the proton electrochemical gradient generated by vacuolar H(+)-ATPase in an overall electrogenic mechanism. May contribute to the synaptic uptake of neurotransmitter precursors in a process coupled in part to vesicle exocytosis. The chain is Sodium-dependent neutral amino acid transporter SLC6A17 from Bos taurus (Bovine).